Reading from the N-terminus, the 208-residue chain is MTPRGRFITLEGVDGAGKSTHTAWMVQALRDLGLTVLATREPGGTPVGEKLRELLLSEPMALETETLLMFAARCEHVREVIAPALARGEWVVCDRFTDASYAYQGGGRQLGAARVAALEQWVHPDLQPDRTWLFDVPLDVARARLARSRQLDRFEREEDAFFERTRAAYHERARSSDGRIRIIDSSRPLEVVRAQLDSEVRELVAQAA.

12–19 (GVDGAGKS) contributes to the ATP binding site.

The protein belongs to the thymidylate kinase family.

It catalyses the reaction dTMP + ATP = dTDP + ADP. Its function is as follows. Phosphorylation of dTMP to form dTDP in both de novo and salvage pathways of dTTP synthesis. This is Thymidylate kinase from Bordetella bronchiseptica (strain ATCC BAA-588 / NCTC 13252 / RB50) (Alcaligenes bronchisepticus).